Consider the following 248-residue polypeptide: Probable transcriptional regulatory protein BOV_1660 (248 aa).

This sequence belongs to the TACO1 family.

It is found in the cytoplasm. The protein is Probable transcriptional regulatory protein BOV_1660 of Brucella ovis (strain ATCC 25840 / 63/290 / NCTC 10512).